A 663-amino-acid chain; its full sequence is 4-hydroxy-3-methylbut-2-en-1-yl diphosphate synthase (flavodoxin) (663 aa).

Residues cysteine 568, cysteine 571, cysteine 602, and glutamate 609 each contribute to the [4Fe-4S] cluster site.

The protein belongs to the IspG family. The cofactor is [4Fe-4S] cluster.

The catalysed reaction is (2E)-4-hydroxy-3-methylbut-2-enyl diphosphate + oxidized [flavodoxin] + H2O + 2 H(+) = 2-C-methyl-D-erythritol 2,4-cyclic diphosphate + reduced [flavodoxin]. Its pathway is isoprenoid biosynthesis; isopentenyl diphosphate biosynthesis via DXP pathway; isopentenyl diphosphate from 1-deoxy-D-xylulose 5-phosphate: step 5/6. In terms of biological role, converts 2C-methyl-D-erythritol 2,4-cyclodiphosphate (ME-2,4cPP) into 1-hydroxy-2-methyl-2-(E)-butenyl 4-diphosphate. The chain is 4-hydroxy-3-methylbut-2-en-1-yl diphosphate synthase (flavodoxin) from Leptospira borgpetersenii serovar Hardjo-bovis (strain JB197).